A 172-amino-acid chain; its full sequence is Arginine repressor (172 aa).

It belongs to the ArgR family.

The protein localises to the cytoplasm. Its pathway is amino-acid biosynthesis; L-arginine biosynthesis [regulation]. Its function is as follows. Regulates arginine biosynthesis genes. The polypeptide is Arginine repressor (Bifidobacterium adolescentis (strain ATCC 15703 / DSM 20083 / NCTC 11814 / E194a)).